The chain runs to 160 residues: MKQKYSKKSKKWIYITTIIFILILDISSKHLIIKYIKTYDTKKIFSVLNFFHVHNHGAAFSFLSDQNGWQKWFLSTVSILTILVMTRIITKLKKQETKKITAYSLIIAGATGNLIDRIFYGFVVDFIDIHINDWHFATFNIADCSIFIGIIILMRINYST.

A run of 3 helical transmembrane segments spans residues 13 to 33 (IYIT…HLII), 72 to 92 (WFLS…ITKL), and 104 to 124 (SLII…GFVV). Residues Asp125 and Asp143 contribute to the active site. A helical membrane pass occupies residues 134 to 154 (WHFATFNIADCSIFIGIIILM).

Belongs to the peptidase A8 family.

Its subcellular location is the cell inner membrane. The catalysed reaction is Release of signal peptides from bacterial membrane prolipoproteins. Hydrolyzes -Xaa-Yaa-Zaa-|-(S,diacylglyceryl)Cys-, in which Xaa is hydrophobic (preferably Leu), and Yaa (Ala or Ser) and Zaa (Gly or Ala) have small, neutral side chains.. The protein operates within protein modification; lipoprotein biosynthesis (signal peptide cleavage). This protein specifically catalyzes the removal of signal peptides from prolipoproteins. The sequence is that of Lipoprotein signal peptidase from Buchnera aphidicola subsp. Acyrthosiphon pisum (strain Tuc7).